A 285-amino-acid chain; its full sequence is Bifunctional protein FolD (285 aa).

Residues 166 to 168 and Ile-232 each bind NADP(+); that span reads GAS.

It belongs to the tetrahydrofolate dehydrogenase/cyclohydrolase family. As to quaternary structure, homodimer.

The catalysed reaction is (6R)-5,10-methylene-5,6,7,8-tetrahydrofolate + NADP(+) = (6R)-5,10-methenyltetrahydrofolate + NADPH. It carries out the reaction (6R)-5,10-methenyltetrahydrofolate + H2O = (6R)-10-formyltetrahydrofolate + H(+). Its pathway is one-carbon metabolism; tetrahydrofolate interconversion. Its activity is regulated as follows. The NAD(+)-dependent dehydrogenase is activated by inorganic phosphate. Functionally, catalyzes the oxidation of 5,10-methylenetetrahydrofolate to 5,10-methenyltetrahydrofolate and then the hydrolysis of 5,10-methenyltetrahydrofolate to 10-formyltetrahydrofolate. In Photobacterium phosphoreum, this protein is Bifunctional protein FolD.